The following is a 148-amino-acid chain: Nodulation protein NolJ (148 aa).

A compositionally biased stretch (acidic residues) spans 66 to 78; that stretch reads ADEAMEETEEDAD. Disordered stretches follow at residues 66 to 93 and 124 to 148; these read ADEA…VSDG and AAKG…RGYG. The segment covering 124–136 has biased composition (low complexity); the sequence is AAKGAGAAVPGPN.

Functionally, involved in efficiency of soybean nodulation and in nodulation delay. The polypeptide is Nodulation protein NolJ (nolJ) (Rhizobium fredii (Sinorhizobium fredii)).